The primary structure comprises 432 residues: Enolase (432 aa).

Position 167 (Gln167) interacts with (2R)-2-phosphoglycerate. Glu209 functions as the Proton donor in the catalytic mechanism. Mg(2+) is bound by residues Asp246, Glu291, and Asp318. (2R)-2-phosphoglycerate contacts are provided by Lys343, Arg372, Ser373, and Lys394. The active-site Proton acceptor is Lys343.

Belongs to the enolase family. In terms of assembly, component of the RNA degradosome, a multiprotein complex involved in RNA processing and mRNA degradation. Mg(2+) is required as a cofactor.

It is found in the cytoplasm. It localises to the secreted. The protein localises to the cell surface. It catalyses the reaction (2R)-2-phosphoglycerate = phosphoenolpyruvate + H2O. Its pathway is carbohydrate degradation; glycolysis; pyruvate from D-glyceraldehyde 3-phosphate: step 4/5. In terms of biological role, catalyzes the reversible conversion of 2-phosphoglycerate (2-PG) into phosphoenolpyruvate (PEP). It is essential for the degradation of carbohydrates via glycolysis. This is Enolase from Buchnera aphidicola subsp. Cinara cedri (strain Cc).